The primary structure comprises 113 residues: Vitelline membrane protein Vm32E (113 aa).

A signal peptide spans 1 to 17 (MKIVAFTLVAFVALAGA). The 38-residue stretch at 33 to 70 (GYPAPPCPTNYLFSCQPNLAPVPCAQQAPAYGSAGAYT) folds into the VM domain.

It belongs to the vitelline membrane family.

Its subcellular location is the secreted. Major early eggshell protein. This is Vitelline membrane protein Vm32E from Drosophila erecta (Fruit fly).